A 78-amino-acid polypeptide reads, in one-letter code: Large ribosomal subunit protein uL30 (78 aa).

Residues 58–68 (DDTSPDAETGA) are compositionally biased toward acidic residues. The interval 58 to 78 (DDTSPDAETGADLERDGGNRS) is disordered. Positions 69–78 (DLERDGGNRS) are enriched in basic and acidic residues.

It belongs to the universal ribosomal protein uL30 family. As to quaternary structure, part of the 50S ribosomal subunit.

The protein is Large ribosomal subunit protein uL30 of Roseiflexus sp. (strain RS-1).